We begin with the raw amino-acid sequence, 218 residues long: Claudin-5 (218 aa).

Topologically, residues 1–7 (MGSAALE) are cytoplasmic. The helical transmembrane segment at 8-28 (ILGLVLCLVGWGGLILACGLP) threads the bilayer. Over 29–81 (MWQVTAFLDHNIVTAQTTWKGLWMSCVVQSTGHMQCKVYDSVLALSTEVQAAR) the chain is Extracellular. A helical membrane pass occupies residues 82–102 (ALTVSAVLLAFVALFVTLAGA). The Cytoplasmic segment spans residues 103-122 (QCTTCVAPGPAKARVALTGG). The helical transmembrane segment at 123–143 (VLYLFCGLLALVPLCWFANIV) threads the bilayer. Residues 144–159 (VREFYDPSVPVSQKYE) are Extracellular-facing. The helical transmembrane segment at 160-180 (LGAALYIGWAATALLMVGGCL) threads the bilayer. Residues 181-218 (LCCGAWVCTGRPDLSFPVKYSAPRRPTATGDYDKKNYV) lie on the Cytoplasmic side of the membrane. Positions 217 to 218 (YV) are interactions with TJP1, TJP2 and TJP3.

The protein belongs to the claudin family. In terms of assembly, directly interacts with TJP1/ZO-1, TJP2/ZO-2 and TJP3/ZO-3. Interacts with MPDZ.

It is found in the cell junction. The protein resides in the tight junction. The protein localises to the cell membrane. In terms of biological role, plays a major role in tight junction-specific obliteration of the intercellular space. This is Claudin-5 (CLDN5) from Homo sapiens (Human).